Here is a 184-residue protein sequence, read N- to C-terminus: Photosystem I assembly protein Ycf4 (184 aa).

A run of 2 helical transmembrane segments spans residues 19 to 39 (ISNFCWACILFLGSLGFLLVG) and 57 to 77 (IVFFPQGIVMCFYGIAGLFIS).

Belongs to the Ycf4 family.

It localises to the plastid. The protein localises to the chloroplast thylakoid membrane. Its function is as follows. Seems to be required for the assembly of the photosystem I complex. This Nymphaea alba (White water-lily) protein is Photosystem I assembly protein Ycf4.